We begin with the raw amino-acid sequence, 162 residues long: Sorting nexin-12 (162 aa).

A disordered region spans residues 1–20; it reads MSDTAVADTRRLNSKPQDLT. The residue at position 2 (S2) is an N-acetylserine. Position 23 is a phosphotyrosine (Y23). A PX domain is found at 28-152; it reads NFLEIDIFNP…HMFLQEEAID (125 aa). R71, S73, K96, and R119 together coordinate a 1,2-diacyl-sn-glycero-3-phospho-(1D-myo-inositol-3-phosphate). At S73 the chain carries Phosphoserine.

It belongs to the sorting nexin family.

It localises to the membrane. Functionally, may be involved in several stages of intracellular trafficking. The protein is Sorting nexin-12 (SNX12) of Homo sapiens (Human).